We begin with the raw amino-acid sequence, 229 residues long: Heptaprenylglyceryl phosphate synthase (229 aa).

Residue Lys12 participates in sn-glycerol 1-phosphate binding. Mg(2+)-binding residues include Asp14 and Ser40. Sn-glycerol 1-phosphate contacts are provided by residues 159–164, Gly189, and 209–210; these read YLEYSG and GN.

Belongs to the GGGP/HepGP synthase family. Group I subfamily. In terms of assembly, homodimer. It depends on Mg(2+) as a cofactor.

It carries out the reaction sn-glycerol 1-phosphate + all-trans-heptaprenyl diphosphate = 3-heptaprenyl-sn-glycero-1-phosphate + diphosphate. It participates in membrane lipid metabolism; glycerophospholipid metabolism. Its function is as follows. Prenyltransferase that catalyzes in vivo the transfer of the heptaprenyl moiety of heptaprenyl pyrophosphate (HepPP; 35 carbon atoms) to the C3 hydroxyl of sn-glycerol-1-phosphate (G1P), producing heptaprenylglyceryl phosphate (HepGP). This reaction is an ether-bond-formation step in the biosynthesis of archaea-type G1P-based membrane lipids found in Bacillales. The chain is Heptaprenylglyceryl phosphate synthase from Bacillus cytotoxicus (strain DSM 22905 / CIP 110041 / 391-98 / NVH 391-98).